The primary structure comprises 253 residues: 3-deoxy-manno-octulosonate cytidylyltransferase (253 aa).

Belongs to the KdsB family.

The protein resides in the cytoplasm. It catalyses the reaction 3-deoxy-alpha-D-manno-oct-2-ulosonate + CTP = CMP-3-deoxy-beta-D-manno-octulosonate + diphosphate. It participates in nucleotide-sugar biosynthesis; CMP-3-deoxy-D-manno-octulosonate biosynthesis; CMP-3-deoxy-D-manno-octulosonate from 3-deoxy-D-manno-octulosonate and CTP: step 1/1. It functions in the pathway bacterial outer membrane biogenesis; lipopolysaccharide biosynthesis. Its function is as follows. Activates KDO (a required 8-carbon sugar) for incorporation into bacterial lipopolysaccharide in Gram-negative bacteria. This chain is 3-deoxy-manno-octulosonate cytidylyltransferase, found in Neisseria meningitidis serogroup C / serotype 2a (strain ATCC 700532 / DSM 15464 / FAM18).